A 234-amino-acid polypeptide reads, in one-letter code: Phosphoribosylformylglycinamidine synthase subunit PurQ (234 aa).

A Glutamine amidotransferase type-1 domain is found at 6-234; sequence VGVVVFPGSN…ESLFRSLTGV (229 aa). The active-site Nucleophile is Cys-89. Active-site residues include His-206 and Glu-208.

In terms of assembly, part of the FGAM synthase complex composed of 1 PurL, 1 PurQ and 2 PurS subunits.

The protein resides in the cytoplasm. The catalysed reaction is N(2)-formyl-N(1)-(5-phospho-beta-D-ribosyl)glycinamide + L-glutamine + ATP + H2O = 2-formamido-N(1)-(5-O-phospho-beta-D-ribosyl)acetamidine + L-glutamate + ADP + phosphate + H(+). The enzyme catalyses L-glutamine + H2O = L-glutamate + NH4(+). It functions in the pathway purine metabolism; IMP biosynthesis via de novo pathway; 5-amino-1-(5-phospho-D-ribosyl)imidazole from N(2)-formyl-N(1)-(5-phospho-D-ribosyl)glycinamide: step 1/2. Its function is as follows. Part of the phosphoribosylformylglycinamidine synthase complex involved in the purines biosynthetic pathway. Catalyzes the ATP-dependent conversion of formylglycinamide ribonucleotide (FGAR) and glutamine to yield formylglycinamidine ribonucleotide (FGAM) and glutamate. The FGAM synthase complex is composed of three subunits. PurQ produces an ammonia molecule by converting glutamine to glutamate. PurL transfers the ammonia molecule to FGAR to form FGAM in an ATP-dependent manner. PurS interacts with PurQ and PurL and is thought to assist in the transfer of the ammonia molecule from PurQ to PurL. The protein is Phosphoribosylformylglycinamidine synthase subunit PurQ of Chlorobium chlorochromatii (strain CaD3).